A 627-amino-acid chain; its full sequence is MPDTAGLSGPDIINAFVKRLPNNPGVYRMFNSDGGVLYVGKARNLKKRVSNYARGIGHSNRITRMIRETVTMEFVVTRTETEALLLEANLIKRLRPRFNVLMRDDKSFPYILLTGGHRAPGIFKHRGARSRKGDYFGPFASAGAVGRTINALQRAFLLRTCTDSVFETRTRPCLLYQIKRCSAPCTYEISDEDYAGLVAEAKAFLSGKSQSVKDHLAAAMQAASADLDFEHAAVYRDRLAALSHVQSHQGINPQTVEEADVFAIHQEGGMTCIQVFFFRTGQNWGNRAYFPKADSSLGPAEVLGAFLSQFYDDKPCPKLVLLSETVEEQSLITEALSTRAGHKVQVSVPQRGEKKELVQHALTNAREALGRRLAETSSQARLLQGLAETFGLPRAPRRIEVYDNSHIMGTNAVGGMIVAGPEGFVKNQYRKFNIRSTDITPGDDFGMMREVIERRFSRLVKEHGTPAGEVKNPDAFPAWPDVILIDGGQGQVGAVRQILGEMGISDLVTAIGIAKGVDREAGRERFFMEGKQPFTLPPRDPVLYFIQRLRDEAHRFAIGTHRARRKKEIVRNPLDEIAGIGPTRKRALLHHFGTAKAVSRAAVEDLMQIDGISEAMARAIHDHFRDK.

One can recognise a GIY-YIG domain in the interval 22-100 (NNPGVYRMFN…IKRLRPRFNV (79 aa)). In terms of domain architecture, UVR spans 210 to 245 (QSVKDHLAAAMQAASADLDFEHAAVYRDRLAALSHV).

It belongs to the UvrC family. In terms of assembly, interacts with UvrB in an incision complex.

The protein resides in the cytoplasm. In terms of biological role, the UvrABC repair system catalyzes the recognition and processing of DNA lesions. UvrC both incises the 5' and 3' sides of the lesion. The N-terminal half is responsible for the 3' incision and the C-terminal half is responsible for the 5' incision. In Brucella abortus biovar 1 (strain 9-941), this protein is UvrABC system protein C.